The sequence spans 329 residues: DNA-directed RNA polymerase subunit alpha (329 aa).

The interval 1–234 (MQGSVTEFLK…EQLDAFVELR (234 aa)) is alpha N-terminal domain (alpha-NTD). The alpha C-terminal domain (alpha-CTD) stretch occupies residues 248 to 329 (FDPILLRPVD…WPPASLADDL (82 aa)).

The protein belongs to the RNA polymerase alpha chain family. As to quaternary structure, homodimer. The RNAP catalytic core consists of 2 alpha, 1 beta, 1 beta' and 1 omega subunit. When a sigma factor is associated with the core the holoenzyme is formed, which can initiate transcription.

The enzyme catalyses RNA(n) + a ribonucleoside 5'-triphosphate = RNA(n+1) + diphosphate. Functionally, DNA-dependent RNA polymerase catalyzes the transcription of DNA into RNA using the four ribonucleoside triphosphates as substrates. This Shewanella baltica (strain OS155 / ATCC BAA-1091) protein is DNA-directed RNA polymerase subunit alpha.